The following is a 340-amino-acid chain: 4-hydroxy-3-methylbut-2-enyl diphosphate reductase (340 aa).

Cysteine 13 contacts [4Fe-4S] cluster. (2E)-4-hydroxy-3-methylbut-2-enyl diphosphate is bound by residues histidine 42 and histidine 75. The dimethylallyl diphosphate site is built by histidine 42 and histidine 75. The isopentenyl diphosphate site is built by histidine 42 and histidine 75. Position 97 (cysteine 97) interacts with [4Fe-4S] cluster. Residue histidine 125 coordinates (2E)-4-hydroxy-3-methylbut-2-enyl diphosphate. Histidine 125 lines the dimethylallyl diphosphate pocket. Histidine 125 contributes to the isopentenyl diphosphate binding site. The active-site Proton donor is glutamate 127. Residue threonine 165 coordinates (2E)-4-hydroxy-3-methylbut-2-enyl diphosphate. Cysteine 195 is a binding site for [4Fe-4S] cluster. (2E)-4-hydroxy-3-methylbut-2-enyl diphosphate-binding residues include serine 223, serine 224, asparagine 225, and serine 267. Residues serine 223, serine 224, asparagine 225, and serine 267 each contribute to the dimethylallyl diphosphate site. The isopentenyl diphosphate site is built by serine 223, serine 224, asparagine 225, and serine 267. Residues 317–340 (NNLDNKTAASEEADSLSNDTEQEA) form a disordered region. A compositionally biased stretch (polar residues) spans 331–340 (SLSNDTEQEA).

The protein belongs to the IspH family. It depends on [4Fe-4S] cluster as a cofactor.

It catalyses the reaction isopentenyl diphosphate + 2 oxidized [2Fe-2S]-[ferredoxin] + H2O = (2E)-4-hydroxy-3-methylbut-2-enyl diphosphate + 2 reduced [2Fe-2S]-[ferredoxin] + 2 H(+). The catalysed reaction is dimethylallyl diphosphate + 2 oxidized [2Fe-2S]-[ferredoxin] + H2O = (2E)-4-hydroxy-3-methylbut-2-enyl diphosphate + 2 reduced [2Fe-2S]-[ferredoxin] + 2 H(+). It functions in the pathway isoprenoid biosynthesis; dimethylallyl diphosphate biosynthesis; dimethylallyl diphosphate from (2E)-4-hydroxy-3-methylbutenyl diphosphate: step 1/1. It participates in isoprenoid biosynthesis; isopentenyl diphosphate biosynthesis via DXP pathway; isopentenyl diphosphate from 1-deoxy-D-xylulose 5-phosphate: step 6/6. Functionally, catalyzes the conversion of 1-hydroxy-2-methyl-2-(E)-butenyl 4-diphosphate (HMBPP) into a mixture of isopentenyl diphosphate (IPP) and dimethylallyl diphosphate (DMAPP). Acts in the terminal step of the DOXP/MEP pathway for isoprenoid precursor biosynthesis. The polypeptide is 4-hydroxy-3-methylbut-2-enyl diphosphate reductase (Zymomonas mobilis subsp. mobilis (strain ATCC 31821 / ZM4 / CP4)).